The chain runs to 217 residues: Translation initiation factor 6 (217 aa).

It belongs to the eIF-6 family.

Its function is as follows. Binds to the 50S ribosomal subunit and prevents its association with the 30S ribosomal subunit to form the 70S initiation complex. In Methanococcoides burtonii (strain DSM 6242 / NBRC 107633 / OCM 468 / ACE-M), this protein is Translation initiation factor 6.